The sequence spans 326 residues: MGMIISMAMTAVTIWTKTKPGRVSCFIRKNSTMVNAPIGIIGGSGLYQMEALKNVEEVTLDTPFGAPSDSFIVGELAGVRVAFLARHGRGHHLLPSEIPFRANIHGMKQLGVKYLISASAVGSLQAEAKPLDMVVPDQFIDRTRQRISTFFGEGIVAHIGFGNPICPQLAQCLSTAIAGLELEGVTLHDRGTYVSMEGPAFSTIAESNLYRSWGGTVIGMTNLPEAKLAREAEIAYATLALVTDYDCWHPDHDHVTVEMVIGNLQKNAVNAQQVILETVKQLAANPFESIAHRALQYAVLTPPDKFPAATYEKLSLLLGKYYPPAP.

Phosphate-binding positions include serine 44, 86–87, and 119–120; these read RH and SA. Residue methionine 220 participates in substrate binding. Threonine 221 provides a ligand contact to phosphate. Residue 244–246 coordinates substrate; the sequence is DYD.

The protein belongs to the PNP/MTAP phosphorylase family. MTAP subfamily. Homohexamer. Dimer of a homotrimer.

The enzyme catalyses S-methyl-5'-thioadenosine + phosphate = 5-(methylsulfanyl)-alpha-D-ribose 1-phosphate + adenine. Its pathway is amino-acid biosynthesis; L-methionine biosynthesis via salvage pathway; S-methyl-5-thio-alpha-D-ribose 1-phosphate from S-methyl-5'-thioadenosine (phosphorylase route): step 1/1. Catalyzes the reversible phosphorylation of S-methyl-5'-thioadenosine (MTA) to adenine and 5-methylthioribose-1-phosphate. Involved in the breakdown of MTA, a major by-product of polyamine biosynthesis. Responsible for the first step in the methionine salvage pathway after MTA has been generated from S-adenosylmethionine. Has broad substrate specificity with 6-aminopurine nucleosides as preferred substrates. This chain is S-methyl-5'-thioadenosine phosphorylase, found in Synechocystis sp. (strain PCC 6803 / GT-S).